Consider the following 173-residue polypeptide: Crossover junction endodeoxyribonuclease RuvC (173 aa).

Active-site residues include Asp-8, Glu-67, and Asp-139. Residues Asp-8, Glu-67, and Asp-139 each contribute to the Mg(2+) site.

It belongs to the RuvC family. In terms of assembly, homodimer which binds Holliday junction (HJ) DNA. The HJ becomes 2-fold symmetrical on binding to RuvC with unstacked arms; it has a different conformation from HJ DNA in complex with RuvA. In the full resolvosome a probable DNA-RuvA(4)-RuvB(12)-RuvC(2) complex forms which resolves the HJ. Requires Mg(2+) as cofactor.

It is found in the cytoplasm. It carries out the reaction Endonucleolytic cleavage at a junction such as a reciprocal single-stranded crossover between two homologous DNA duplexes (Holliday junction).. In terms of biological role, the RuvA-RuvB-RuvC complex processes Holliday junction (HJ) DNA during genetic recombination and DNA repair. Endonuclease that resolves HJ intermediates. Cleaves cruciform DNA by making single-stranded nicks across the HJ at symmetrical positions within the homologous arms, yielding a 5'-phosphate and a 3'-hydroxyl group; requires a central core of homology in the junction. The consensus cleavage sequence is 5'-(A/T)TT(C/G)-3'. Cleavage occurs on the 3'-side of the TT dinucleotide at the point of strand exchange. HJ branch migration catalyzed by RuvA-RuvB allows RuvC to scan DNA until it finds its consensus sequence, where it cleaves and resolves the cruciform DNA. The sequence is that of Crossover junction endodeoxyribonuclease RuvC from Shewanella pealeana (strain ATCC 700345 / ANG-SQ1).